A 276-amino-acid polypeptide reads, in one-letter code: MQYILKLKYYLYNITWKLVFICVMLVLLIVGIHKNIKWVCDYYSGPLSYIIVTGNRFFTTNDDINYIILKSGVLGTFITQDVNIIQKQIKQMPWIQKVSVRKQWPNTLKINLIEYIPIAYWNNEFISTTGVVFSVSECLYNEYSSFVRKMYQEIPILYGPTGKDQEVLNNYLRFSAILKSSNFQIKSVKTDTCYTWQLVLDNNVCLKLGCVNLIERLHYFIKVYPFLVKEMDEKNKYIDYVDLRYNSGCSVRWIHNMIDPVFHAINNVSKGSHDYD.

The Cytoplasmic segment spans residues 1–11 (MQYILKLKYYL). The chain crosses the membrane as a helical span at residues 12–32 (YNITWKLVFICVMLVLLIVGI). Residues 33-276 (HKNIKWVCDY…NVSKGSHDYD (244 aa)) lie on the Periplasmic side of the membrane. A POTRA domain is found at 45-115 (GPLSYIIVTG…NTLKINLIEY (71 aa)).

It belongs to the FtsQ/DivIB family. FtsQ subfamily. As to quaternary structure, part of a complex composed of FtsB, FtsL and FtsQ.

The protein localises to the cell inner membrane. Essential cell division protein. May link together the upstream cell division proteins, which are predominantly cytoplasmic, with the downstream cell division proteins, which are predominantly periplasmic. May control correct divisome assembly. The sequence is that of Cell division protein FtsQ from Blochmanniella floridana.